Consider the following 488-residue polypeptide: F-box protein At3g60790 (488 aa).

Residues 1 to 21 (MTTQSSSSSSSLPSSLSSTPP) are disordered. Residues 49–95 (VDRISMLPDEMLQKILSTLSTKDAVITSTLSKRWVDQWKRIPHLCVD) enclose the F-box domain.

The sequence is that of F-box protein At3g60790 from Arabidopsis thaliana (Mouse-ear cress).